We begin with the raw amino-acid sequence, 314 residues long: Endolytic peptidoglycan transglycosylase RlpA (314 aa).

Residues 1 to 19 (MGWALKKVCFLGVIFLISA) form the signal peptide. Cysteine 20 carries N-palmitoyl cysteine lipidation. A lipid anchor (S-diacylglycerol cysteine) is attached at cysteine 20. One can recognise an SPOR domain in the interval 241–314 (SVSGGKFSLQ…YNQNAVLTRE (74 aa)).

The protein belongs to the RlpA family.

Its subcellular location is the cell membrane. Functionally, lytic transglycosylase with a strong preference for naked glycan strands that lack stem peptides. The polypeptide is Endolytic peptidoglycan transglycosylase RlpA (Helicobacter pylori (strain J99 / ATCC 700824) (Campylobacter pylori J99)).